Here is a 199-residue protein sequence, read N- to C-terminus: Superoxide dismutase [Mn/Fe] (199 aa).

Fe(3+) is bound by residues His27, His81, Asp161, and His165. Mn(2+) contacts are provided by His27, His81, Asp161, and His165.

This sequence belongs to the iron/manganese superoxide dismutase family. Homodimer. Requires Mn(2+) as cofactor. Fe(3+) is required as a cofactor.

The catalysed reaction is 2 superoxide + 2 H(+) = H2O2 + O2. Functionally, destroys superoxide anion radicals which are normally produced within the cells and which are toxic to biological systems. Catalyzes the dismutation of superoxide anion radicals into O2 and H2O2 by successive reduction and oxidation of the transition metal ion at the active site. This is Superoxide dismutase [Mn/Fe] (sodA) from Staphylococcus haemolyticus (strain JCSC1435).